The primary structure comprises 292 residues: Probable endonuclease 4 (292 aa).

Residues H71, H111, E148, D182, H185, H217, D230, H232, and E262 each contribute to the Zn(2+) site.

It belongs to the AP endonuclease 2 family. It depends on Zn(2+) as a cofactor.

It catalyses the reaction Endonucleolytic cleavage to 5'-phosphooligonucleotide end-products.. Endonuclease IV plays a role in DNA repair. It cleaves phosphodiester bonds at apurinic or apyrimidinic (AP) sites, generating a 3'-hydroxyl group and a 5'-terminal sugar phosphate. In Aster yellows witches'-broom phytoplasma (strain AYWB), this protein is Probable endonuclease 4.